The sequence spans 137 residues: NADH dehydrogenase [ubiquinone] 1 beta subcomplex subunit 7 (137 aa).

Glycine 2 carries N-myristoyl glycine lipidation. Residues 56-98 (RDYCAHYLIRLLKCKRDSFPNFLACKHEQHDWDYCEHLDYVKR) enclose the CHCH domain. The Cx9C motif 1 signature appears at 59–69 (CAHYLIRLLKC). 2 disulfides stabilise this stretch: cysteine 59/cysteine 90 and cysteine 69/cysteine 80. The residue at position 73 (serine 73) is a Phosphoserine. The Cx9C motif 2 signature appears at 80–90 (CKHEQHDWDYC).

Belongs to the complex I NDUFB7 subunit family. Complex I is composed of 45 different subunits.

The protein localises to the mitochondrion inner membrane. Its subcellular location is the mitochondrion intermembrane space. Accessory subunit of the mitochondrial membrane respiratory chain NADH dehydrogenase (Complex I), that is believed not to be involved in catalysis. Complex I functions in the transfer of electrons from NADH to the respiratory chain. The immediate electron acceptor for the enzyme is believed to be ubiquinone. The protein is NADH dehydrogenase [ubiquinone] 1 beta subcomplex subunit 7 (Ndufb7) of Mus musculus (Mouse).